Reading from the N-terminus, the 268-residue chain is Resolvase (268 aa).

A Tyr recombinase domain is found at 47-250 (ELPKYLLAPE…FALDVAARHR (204 aa)). Residues Arg82, Lys114, His202, Arg205, and His228 contribute to the active site. The active-site O-(3'-phospho-DNA)-tyrosine intermediate is the Tyr237.

The protein belongs to the 'phage' integrase family.

Acts as a repressor of transcription and as a site-specific resolvase that cleaves at the RfsF site. This chain is Resolvase (resD), found in Escherichia coli (strain K12).